A 171-amino-acid chain; its full sequence is Small ribosomal subunit protein uS5 (171 aa).

One can recognise an S5 DRBM domain in the interval 14–77 (YIEKLVNIRR…DKARKAMKNV (64 aa)).

The protein belongs to the universal ribosomal protein uS5 family. In terms of assembly, part of the 30S ribosomal subunit. Contacts proteins S4 and S8.

With S4 and S12 plays an important role in translational accuracy. Its function is as follows. Located at the back of the 30S subunit body where it stabilizes the conformation of the head with respect to the body. The protein is Small ribosomal subunit protein uS5 of Vesicomyosocius okutanii subsp. Calyptogena okutanii (strain HA).